The sequence spans 571 residues: Sulfite reductase [NADPH] hemoprotein beta-component (571 aa).

Positions 435, 441, 480, and 484 each coordinate [4Fe-4S] cluster. Cysteine 484 is a binding site for siroheme.

It belongs to the nitrite and sulfite reductase 4Fe-4S domain family. In terms of assembly, alpha(8)-beta(8). The alpha component is a flavoprotein, the beta component is a hemoprotein. Siroheme is required as a cofactor. The cofactor is [4Fe-4S] cluster.

The catalysed reaction is hydrogen sulfide + 3 NADP(+) + 3 H2O = sulfite + 3 NADPH + 4 H(+). The protein operates within sulfur metabolism; hydrogen sulfide biosynthesis; hydrogen sulfide from sulfite (NADPH route): step 1/1. Its function is as follows. Component of the sulfite reductase complex that catalyzes the 6-electron reduction of sulfite to sulfide. This is one of several activities required for the biosynthesis of L-cysteine from sulfate. This is Sulfite reductase [NADPH] hemoprotein beta-component from Dickeya chrysanthemi (strain Ech1591) (Dickeya zeae (strain Ech1591)).